A 376-amino-acid polypeptide reads, in one-letter code: uncharacterized protein (376 aa).

2 helical membrane-spanning segments follow: residues 153-173 (QGTLIKFQQILVCLAIIVLFA) and 188-208 (HRPFLIDFFTINAIFTVLAVY).

It is found in the membrane. This is an uncharacterized protein from Saccharomyces cerevisiae (strain ATCC 204508 / S288c) (Baker's yeast).